Consider the following 213-residue polypeptide: Small ribosomal subunit protein uS5 (213 aa).

Residues Met-1–Arg-42 form a disordered region. Residues Tyr-45–Val-108 enclose the S5 DRBM domain.

Belongs to the universal ribosomal protein uS5 family. As to quaternary structure, part of the 30S ribosomal subunit. Contacts proteins S4 and S8.

In terms of biological role, with S4 and S12 plays an important role in translational accuracy. Its function is as follows. Located at the back of the 30S subunit body where it stabilizes the conformation of the head with respect to the body. This is Small ribosomal subunit protein uS5 from Corynebacterium urealyticum (strain ATCC 43042 / DSM 7109).